Here is a 325-residue protein sequence, read N- to C-terminus: Phospho-N-acetylmuramoyl-pentapeptide-transferase (325 aa).

10 helical membrane passes run 9 to 29 (ALLVSFFVALGGGRVLIPWLL), 53 to 73 (TMGGIIFLLSLVVTVVVFQAF), 77 to 97 (TLLLLITTLLFGLLGFLDDYL), 112 to 132 (KLLGQVIFSLVLTFGAVAFLG), 154 to 174 (LGNVFFFAATIFIMVGFANAV), 182 to 202 (GLCSSVTLIVMSFFAMTSLAL), 204 to 224 (EKGLFIFALALMGGLVGFLVY), 231 to 251 (VFMGDTGSLALGAAVAGFAVL), 257 to 277 (FLLLVGLIYVVETLSVIIQVI), and 305 to 325 (KIVLVFSLVTLIMVLISGYGL).

This sequence belongs to the glycosyltransferase 4 family. MraY subfamily. Mg(2+) serves as cofactor.

It is found in the cell membrane. It catalyses the reaction UDP-N-acetyl-alpha-D-muramoyl-L-alanyl-gamma-D-glutamyl-meso-2,6-diaminopimeloyl-D-alanyl-D-alanine + di-trans,octa-cis-undecaprenyl phosphate = di-trans,octa-cis-undecaprenyl diphospho-N-acetyl-alpha-D-muramoyl-L-alanyl-D-glutamyl-meso-2,6-diaminopimeloyl-D-alanyl-D-alanine + UMP. It functions in the pathway cell wall biogenesis; peptidoglycan biosynthesis. Functionally, catalyzes the initial step of the lipid cycle reactions in the biosynthesis of the cell wall peptidoglycan: transfers peptidoglycan precursor phospho-MurNAc-pentapeptide from UDP-MurNAc-pentapeptide onto the lipid carrier undecaprenyl phosphate, yielding undecaprenyl-pyrophosphoryl-MurNAc-pentapeptide, known as lipid I. The polypeptide is Phospho-N-acetylmuramoyl-pentapeptide-transferase (Carboxydothermus hydrogenoformans (strain ATCC BAA-161 / DSM 6008 / Z-2901)).